The chain runs to 648 residues: Threonine--tRNA ligase (648 aa).

The TGS domain maps to 1–61; the sequence is MINITFPDGA…TEDGSIEIVT (61 aa). A catalytic region spans residues 242–540; the sequence is DHRKLGKELD…LIENYKGAFP (299 aa). Zn(2+)-binding residues include C336, H387, and H517.

It belongs to the class-II aminoacyl-tRNA synthetase family. Homodimer. Zn(2+) is required as a cofactor.

The protein localises to the cytoplasm. The enzyme catalyses tRNA(Thr) + L-threonine + ATP = L-threonyl-tRNA(Thr) + AMP + diphosphate + H(+). Functionally, catalyzes the attachment of threonine to tRNA(Thr) in a two-step reaction: L-threonine is first activated by ATP to form Thr-AMP and then transferred to the acceptor end of tRNA(Thr). Also edits incorrectly charged L-seryl-tRNA(Thr). The protein is Threonine--tRNA ligase of Streptococcus thermophilus (strain ATCC BAA-250 / LMG 18311).